The chain runs to 157 residues: Transcription antitermination protein NusB (157 aa).

It belongs to the NusB family.

Involved in transcription antitermination. Required for transcription of ribosomal RNA (rRNA) genes. Binds specifically to the boxA antiterminator sequence of the ribosomal RNA (rrn) operons. The sequence is that of Transcription antitermination protein NusB from Xylella fastidiosa (strain M12).